The chain runs to 197 residues: CASP-like protein 1B1 (197 aa).

Alanine 2 carries the N-acetylalanine modification. The Cytoplasmic segment spans residues 2–17 (AVSKLTLAATSGKSCK). Residues 18-38 (ILLGLRLLAFSATLSAAIVMG) form a helical membrane-spanning segment. Topologically, residues 39-69 (LNKETKTFIVGKVGNTPIQATFTAKFDHTPA) are extracellular. A helical transmembrane segment spans residues 70–90 (FVFFVVANAMVSFHNLLMIAL). At 91–106 (QIFGGKMEFTGFRLLS) the chain is on the cytoplasmic side. A helical transmembrane segment spans residues 107-127 (VAILDMLNVTLISAAANAAAF). Residues 128–156 (MAEVGKNGNKHARWDKICDRFATYCDHGA) are Extracellular-facing. A helical transmembrane segment spans residues 157–177 (GALIAAFAGVILMLIISAASI). Over 178 to 197 (SRLVQPNKCCSTTASPSVVP) the chain is Cytoplasmic.

This sequence belongs to the Casparian strip membrane proteins (CASP) family. Homodimer and heterodimers.

It is found in the cell membrane. The protein is CASP-like protein 1B1 of Arabidopsis thaliana (Mouse-ear cress).